We begin with the raw amino-acid sequence, 417 residues long: Gamma-glutamyl phosphate reductase (417 aa).

Belongs to the gamma-glutamyl phosphate reductase family.

It localises to the cytoplasm. The enzyme catalyses L-glutamate 5-semialdehyde + phosphate + NADP(+) = L-glutamyl 5-phosphate + NADPH + H(+). Its pathway is amino-acid biosynthesis; L-proline biosynthesis; L-glutamate 5-semialdehyde from L-glutamate: step 2/2. In terms of biological role, catalyzes the NADPH-dependent reduction of L-glutamate 5-phosphate into L-glutamate 5-semialdehyde and phosphate. The product spontaneously undergoes cyclization to form 1-pyrroline-5-carboxylate. This is Gamma-glutamyl phosphate reductase from Legionella pneumophila (strain Lens).